The sequence spans 180 residues: NAD(P)H-quinone oxidoreductase subunit I, chloroplastic (180 aa).

4Fe-4S ferredoxin-type domains lie at 55–84 and 95–124; these read GRIHFEFDKCIACEVCVRVCPIDLPLVDWR and LNYSIDFGVCIFCGNCVEYCPTNCLSMTEE. [4Fe-4S] cluster contacts are provided by Cys-64, Cys-67, Cys-70, Cys-74, Cys-104, Cys-107, Cys-110, and Cys-114.

It belongs to the complex I 23 kDa subunit family. In terms of assembly, NDH is composed of at least 16 different subunits, 5 of which are encoded in the nucleus. [4Fe-4S] cluster is required as a cofactor.

The protein localises to the plastid. It is found in the chloroplast thylakoid membrane. It carries out the reaction a plastoquinone + NADH + (n+1) H(+)(in) = a plastoquinol + NAD(+) + n H(+)(out). The catalysed reaction is a plastoquinone + NADPH + (n+1) H(+)(in) = a plastoquinol + NADP(+) + n H(+)(out). Its function is as follows. NDH shuttles electrons from NAD(P)H:plastoquinone, via FMN and iron-sulfur (Fe-S) centers, to quinones in the photosynthetic chain and possibly in a chloroplast respiratory chain. The immediate electron acceptor for the enzyme in this species is believed to be plastoquinone. Couples the redox reaction to proton translocation, and thus conserves the redox energy in a proton gradient. In Zea mays (Maize), this protein is NAD(P)H-quinone oxidoreductase subunit I, chloroplastic.